The following is a 473-amino-acid chain: G2/mitotic-specific cyclin-1 (473 aa).

The segment covering 1–12 (MGSRNIVQQQNR) has biased composition (polar residues). Disordered regions lie at residues 1–23 (MGSR…AMKQ) and 134–155 (KEKP…APTL). Basic and acidic residues predominate over residues 134–147 (KEKPIEKEKAAEKS).

This sequence belongs to the cyclin family. Cyclin AB subfamily. In terms of assembly, interacts with the CDC2 and CDK2 protein kinases to form a serine/threonine kinase holoenzyme complex. The cyclin subunit imparts substrate specificity to the complex.

In terms of biological role, essential for the control of the cell cycle at the G2/M (mitosis) transition. G2/M cyclins accumulate steadily during G2 and are abruptly destroyed at mitosis. The chain is G2/mitotic-specific cyclin-1 from Antirrhinum majus (Garden snapdragon).